We begin with the raw amino-acid sequence, 362 residues long: Sphingolipid delta(4)-desaturase (362 aa).

Positions 1 to 10 (MAESTATTTA) are enriched in low complexity. Positions 1-20 (MAESTATTTAVPPPAEESWN) are disordered. 3 helical membrane-spanning segments follow: residues 60 to 80 (PLTK…AYLL), 90 to 110 (FFLT…LAIH), and 121 to 143 (TLYN…AASF). The Histidine box-1 signature appears at 110–114 (HELSH). The Histidine box-2 signature appears at 147–151 (HMEHH). The next 3 membrane-spanning stretches (helical) occupy residues 169–189 (LILF…LLFY), 200–220 (PFTL…YLVV), and 228–248 (LAYF…AGHF). A Histidine box-3 motif is present at residues 290–294 (HIEHH).

It belongs to the fatty acid desaturase type 1 family. DEGS subfamily.

It is found in the membrane. The catalysed reaction is an N-acylsphinganine + 2 Fe(II)-[cytochrome b5] + O2 + 2 H(+) = an N-acylsphing-4-enine + 2 Fe(III)-[cytochrome b5] + 2 H2O. Its pathway is lipid metabolism; sphingolipid metabolism. Functionally, delta(4)-fatty-acid desaturase which introduces a double bond at the 4-position in the long-chain base (LCB) of ceramides. Required for sphingosine biosynthesis. The chain is Sphingolipid delta(4)-desaturase (dsd1) from Schizosaccharomyces pombe (strain 972 / ATCC 24843) (Fission yeast).